We begin with the raw amino-acid sequence, 1341 residues long: DNA-directed RNA polymerase subunit Rpo1N (1341 aa).

Cysteine 62, cysteine 65, cysteine 72, histidine 75, cysteine 102, cysteine 105, cysteine 149, and cysteine 152 together coordinate Zn(2+). Mg(2+)-binding residues include aspartate 918, aspartate 920, and aspartate 922.

This sequence belongs to the RNA polymerase beta' chain family. Part of the RNA polymerase complex. Mg(2+) is required as a cofactor. Requires Zn(2+) as cofactor. Post-translationally, this protein undergoes a protein self splicing that involves a post-translational excision of the intervening region (intein) followed by peptide ligation.

It is found in the cytoplasm. The enzyme catalyses RNA(n) + a ribonucleoside 5'-triphosphate = RNA(n+1) + diphosphate. In terms of biological role, DNA-dependent RNA polymerase (RNAP) catalyzes the transcription of DNA into RNA using the four ribonucleoside triphosphates as substrates. Forms the clamp head domain. The polypeptide is DNA-directed RNA polymerase subunit Rpo1N (Methanocaldococcus jannaschii (strain ATCC 43067 / DSM 2661 / JAL-1 / JCM 10045 / NBRC 100440) (Methanococcus jannaschii)).